The sequence spans 1846 residues: Brefeldin A-inhibited guanine nucleotide-exchange protein 1 (1846 aa).

Residues 2–224 (YEGKKTKNMF…QEAKQMERER (223 aa)) form a DCB; DCB:DCB domain and DCB:HUS domain interaction region. The residue at position 52 (serine 52) is a Phosphoserine. Disordered regions lie at residues 216–249 (EAKQ…LRYL), 264–304 (DLEP…ATAA), and 347–410 (ISAS…SPGA). The segment covering 264-277 (DLEPQTHDVDKSLQ) has biased composition (basic and acidic residues). Serine 286, serine 289, and serine 290 each carry phosphoserine. Polar residues-rich tracts occupy residues 348–357 (SASTEGNTGT) and 391–406 (SVSS…SSGP). 2 positions are modified to phosphoserine: serine 394 and serine 407. Residues 554–574 (ADAQSVVDIYVNYDCDLNAAN) are HUS; DCB:HUS domain interaction. A disordered region spans residues 631 to 684 (PNSQTTLGQEKPSEQEISEVKHPETINRYGSLNSLESTSSSGIGSYSTQMSGTD). Residues 641–655 (KPSEQEISEVKHPET) show a composition bias toward basic and acidic residues. The span at 661–681 (SLNSLESTSSSGIGSYSTQMS) shows a compositional bias: low complexity. The region spanning 688–877 (QFEVLKQQKE…SAIYNEIAGK (190 aa)) is the SEC7 domain. The Nuclear localization signal (NLS) signature appears at 708-712 (KKPKR). 3 positions are modified to phosphoserine: serine 1076, serine 1563, and serine 1566.

In terms of assembly, homodimer. Interacts with ARFGEF2/BIG2; both proteins are probably part of the same or very similar macromolecular complexes. Interacts with FKBP2. Interacts with MYO9B. Interacts with PRKAR1A and PRKAR2A. Interacts with PPP1CC. Interacts with NCL, FBL, NUP62 and U3 small nucleolar RNA. Interacts with DPY30. Interacts with PDE3A. Interacts with KANK1. Interacts with TBC1D22A and TBC1D22B. In terms of processing, phosphorylated. In vitro phosphorylated by PKA reducing its GEF activity and dephosphorylated by phosphatase PP1.

The protein localises to the cytoplasm. It is found in the perinuclear region. The protein resides in the golgi apparatus. Its subcellular location is the trans-Golgi network. It localises to the nucleus. The protein localises to the nucleolus. It is found in the nucleus matrix. The protein resides in the membrane. Inhibited by brefeldin A. Its function is as follows. Promotes guanine-nucleotide exchange on ARF1 and ARF3. Promotes the activation of ARF1/ARF3 through replacement of GDP with GTP. Involved in vesicular trafficking. Required for the maintenance of Golgi structure; the function may be independent of its GEF activity. Required for the maturation of integrin beta-1 in the Golgi. Involved in the establishment and persistence of cell polarity during directed cell movement in wound healing. Proposed to act as A kinase-anchoring protein (AKAP) and may mediate crosstalk between Arf and PKA pathways. Inhibits GAP activity of MYO9B probably through competitive RhoA binding. The function in the nucleus remains to be determined. The chain is Brefeldin A-inhibited guanine nucleotide-exchange protein 1 (Arfgef1) from Mus musculus (Mouse).